The primary structure comprises 721 residues: Ophiobolin F synthase oblA (721 aa).

Positions 5–325 (YDQPYSVLLD…RYNLKAEWNE (321 aa)) are (7Z)-ophiobola-7,19-dien-3-ol synthase. Mg(2+) is bound by residues aspartate 97 and aspartate 101. Aspartate 97 serves as a coordination point for substrate. Residues 97 to 101 (DDVID) carry the DDXXD 1 motif. Substrate-binding positions include 185-188 (RSLD), asparagine 229, 233-237 (SFEKE), and 316-317 (RY). The short motif at 229–237 (NDLFSFEKE) is the NSE/DTE element. The interval 326 to 721 (LQMLRAKHGV…LRLMMEMLKV (396 aa)) is geranylfarnesyl diphosphate synthase. The interval 348–387 (SMDHIWKKGSTQGESKGEKRKRQSVNGTNGVNGTNGVKKP) is disordered. Residues 372-384 (VNGTNGVNGTNGV) are compositionally biased toward low complexity. 3 residues coordinate isopentenyl diphosphate: lysine 432, arginine 435, and histidine 464. Positions 471 and 475 each coordinate Mg(2+). Residues 471-475 (DDLED) carry the DDXXD 2 motif. Arginine 480 contacts dimethylallyl diphosphate. Arginine 481 serves as a coordination point for isopentenyl diphosphate. Dimethylallyl diphosphate-binding residues include lysine 558, threonine 559, glutamine 597, asparagine 604, lysine 614, and lysine 624.

In the N-terminal section; belongs to the terpene synthase family. The protein in the C-terminal section; belongs to the FPP/GGPP synthase family. Mg(2+) serves as cofactor.

The catalysed reaction is isopentenyl diphosphate + (2E,6E)-farnesyl diphosphate = (2E,6E,10E)-geranylgeranyl diphosphate + diphosphate. It catalyses the reaction isopentenyl diphosphate + (2E,6E,10E)-geranylgeranyl diphosphate = (2E,6E,10E,14E)-geranylfarnesyl diphosphate + diphosphate. It carries out the reaction (2E,6E,10E,14E)-geranylfarnesyl diphosphate + H2O = ophiobolin F + diphosphate. It functions in the pathway secondary metabolite biosynthesis; terpenoid biosynthesis. Its function is as follows. Bifunctional sesterterpene synthase; part of the gene cluster that mediates the biosynthesis of the sesterterpenes ophiobolins, fungal phytotoxins with potential anti-cancer activities. The first step of the pathway is performed by the sesterterpene synthase oblA that possesses both prenyl transferase and terpene cyclase activity, converting isopentenyl diphosphate and dimethylallyl diphosphate into geranylfarnesyl diphosphate (GFPP) and further converting GFPP into ophiobolin F, respectively. Other sesterterpenoids (C(25) terpenoids) are found as minor products of oblA. The cytochrome P450 monooxygenase oblB then catalyzes a four-step oxidative transformation of ophiobolin F to yield ophiobolin C. The FAD-dependent oxidoreductase oblC might be involved in a later oxidation step that produces ophiobolin A. The sequence is that of Ophiobolin F synthase oblA from Cochliobolus heterostrophus (strain C5 / ATCC 48332 / race O) (Southern corn leaf blight fungus).